We begin with the raw amino-acid sequence, 265 residues long: Silencing boundary-establishment protein FUB1-like protein (265 aa).

The segment at 194–265 is disordered; sequence HPENRSRNEQ…MPPGSSDMFM (72 aa).

The protein belongs to the proteasome inhibitor PI31 family. As to quaternary structure, interacts with the 20S proteasome.

It localises to the cytoplasm. It is found in the nucleus. May play a role in the establishment of transcriptional silencing boundaries, preventing the propagation of heterochromatic silencing. The polypeptide is Silencing boundary-establishment protein FUB1-like protein (Schizosaccharomyces pombe (strain 972 / ATCC 24843) (Fission yeast)).